The following is a 145-amino-acid chain: MKRISTILVGVFLATPVYAADNIHTLGTLSEIELALTAGKPVNVTVDLSLCNPGVADTPATKTRGGMRIDAYRITADGTLAFADQHFTIDRDGKPITQFIRYQIRSNGEADFTMVTFNMPTYERKGTSLAYKCAIDHGLSFRAPQ.

This is an uncharacterized protein from Rhizobium radiobacter (Agrobacterium tumefaciens).